We begin with the raw amino-acid sequence, 3434 residues long: Genome polyprotein (3434 aa).

Over 1-106 the chain is Cytoplasmic; it reads MSKKPGGPGR…NRGTKKKRGN (106 aa). The tract at residues 2–15 is interaction with host EXOC1; sequence SKKPGGPGRNRAIN. A hydrophobic; homodimerization of capsid protein C region spans residues 37-72; it reads LLDGRGPVRFVLALMTFFKFTALAPTKALLGRWKRI. A propeptide spans 105–126 (ER anchor for the capsid protein C, removed in mature form by serine protease NS3); that stretch reads GNNGPGLVMIITLMTVVSMVSS. Residues 107-126 traverse the membrane as a helical segment; that stretch reads NGPGLVMIITLMTVVSMVSS. The Extracellular portion of the chain corresponds to 127 to 248; it reads LKLSNFQGKV…DSTKASRYLM (122 aa). The N-linked (GlcNAc...) asparagine; by host glycan is linked to asparagine 141. A helical transmembrane segment spans residues 249-273; the sequence is KTENWIIRNPGYAFVAVLLGWMLGS. Residues 274 to 278 are Cytoplasmic-facing; the sequence is NNGQR. A helical transmembrane segment spans residues 279 to 293; sequence VVFVVLLLLVAPAYS. Residues 294–745 are Extracellular-facing; that stretch reads FNCLGMSNRD…QVFGGAFRTL (452 aa). Intrachain disulfides connect cysteine 296–cysteine 323, cysteine 353–cysteine 409, cysteine 353–cysteine 414, cysteine 367–cysteine 398, cysteine 385–cysteine 409, cysteine 385–cysteine 414, cysteine 483–cysteine 580, and cysteine 597–cysteine 628. Residues 391–404 are fusion peptide; it reads DRGWGNGCGLFGKG. A helical membrane pass occupies residues 746–766; it reads FGGMSWITQGLMGALLLWMGV. Residues 767–772 are Cytoplasmic-facing; sequence NARDRS. A helical transmembrane segment spans residues 773-793; sequence IALVMLATGGVLLFLATNVHA. At 794 to 1218 the chain is on the extracellular side; it reads DSGCAIDVGR…AFAEANSGGD (425 aa). 2 disulfide bridges follow: cysteine 797–cysteine 808 and cysteine 848–cysteine 936. 3 N-linked (GlcNAc...) asparagine; by host glycosylation sites follow: asparagine 923, asparagine 968, and asparagine 1000. Intrachain disulfides connect cysteine 972–cysteine 1016, cysteine 1073–cysteine 1122, cysteine 1084–cysteine 1105, cysteine 1084–cysteine 1106, cysteine 1105–cysteine 1109, and cysteine 1106–cysteine 1109. Residues 1219 to 1239 traverse the membrane as a helical segment; that stretch reads VVHLALIAAFKIQPGFLAMTF. The Cytoplasmic portion of the chain corresponds to 1240-1249; sequence LRGKWTNQEN. Residues 1250–1270 traverse the membrane as a helical segment; the sequence is ILLALGAAFFQMAATDLNFSL. Topologically, residues 1271–1286 are lumenal; the sequence is PGILNATATAWMLLRA. Residues 1287 to 1307 traverse the membrane as a helical segment; the sequence is ATQPSTSAIVMPLLCLLAPGM. Position 1308 (arginine 1308) is a topological domain, cytoplasmic. The helical transmembrane segment at 1309–1329 threads the bilayer; sequence LLYLDTYRITLIIIGICSLIG. Residues 1330–1340 are Lumenal-facing; that stretch reads ERRRAAAKKKG. A helical transmembrane segment spans residues 1341-1361; that stretch reads AVLLGLALTSTGQFSASVMAA. Topologically, residues 1362-1373 are cytoplasmic; the sequence is GLMACNPNKKRG. A helical transmembrane segment spans residues 1374-1394; that stretch reads WPATEVLTAVGLMFAIVGGLA. Residues 1395-1397 lie on the Lumenal side of the membrane; it reads ELD. A helical transmembrane segment spans residues 1398-1418; sequence VDSMSIPFVLAGLMAVSYTIS. Topologically, residues 1419 to 1475 are cytoplasmic; the sequence is GKSTDLWLERAADITWETDAAITGTSQRLDVKLDDDGDFHLINDPGVPWKIWVIRMT. Residues 1426–1465 form an interacts with and activates NS3 protease region; sequence LERAADITWETDAAITGTSQRLDVKLDDDGDFHLINDPGV. An intramembrane region (helical) is located at residues 1476–1496; that stretch reads ALGFAAWTPWAIIPAGIGYWL. Topologically, residues 1497–2173 are cytoplasmic; the sequence is TVKYAKRGGV…MALEELPDAL (677 aa). Residues 1504-1681 form the Peptidase S7 domain; it reads GGVFWDTPAP…EREEEPVPEA (178 aa). Catalysis depends on charge relay system; for serine protease NS3 activity residues histidine 1554, aspartate 1578, and serine 1638. The region spanning 1684-1840 is the Helicase ATP-binding domain; it reads ADMLRKKQLT…DTNAPVTDIQ (157 aa). Residues 1688 to 1691 are important for RNA-binding; that stretch reads RKKQ. 1697 to 1704 provides a ligand contact to ATP; it reads LHPGAGKT. A DEAH box motif is present at residues 1788-1791; sequence DEAH. A Helicase C-terminal domain is found at 1851–2016; that stretch reads GFEWITEYTG…GLVAQMYGPE (166 aa). An N6-acetyllysine; by host modification is found at lysine 1892. Residues 1956–1980 are disordered; sequence ASAAQRRGRVGRNPSQIGDEYHYGG. A regulates the ATPase activity of NS3 helicase region spans residues 2167–2171; it reads EELPD. The chain crosses the membrane as a helical span at residues 2174 to 2194; it reads ETITLIVALAVMTAGVFLLLV. Topologically, residues 2195–2198 are lumenal; it reads QRRG. Positions 2199–2219 form an intramembrane region, helical; it reads IGKLGLGGMVLGLATFFLWMA. A topological domain (lumenal) is located at residue aspartate 2220. The chain crosses the membrane as a helical span at residues 2221–2241; it reads VSGTKIAGTLLLALLMMIVLI. Residues 2242–2256 are Cytoplasmic-facing; sequence PEPEKQRSQTDNQLA. Residues 2257-2277 form a helical membrane-spanning segment; that stretch reads VFLICVLLVVGVVAANEYGML. Residues 2278 to 2313 lie on the Lumenal side of the membrane; the sequence is ERTKSDLGKIFSSTRQPQSALPLPSMNALALDLRPA. The helical intramembrane region spans 2314-2334; that stretch reads TAWALYGGSTVVLTPLIKHLV. Residues 2335–2368 are Lumenal-facing; that stretch reads TSEYITTSLASISAQAGSLFNLPRGLPFTELDFT. The chain crosses the membrane as a helical span at residues 2369 to 2389; the sequence is VVLVFLGCWGQVSLTTLITAA. At 2390–2446 the chain is on the cytoplasmic side; the sequence is ALATLHYGYMLPGWQAEALRAAQRRTAAGIMKNAVVDGLVATDVPELERTTPLMQKK. Residues 2447–2467 traverse the membrane as a helical segment; that stretch reads VGQILLIGVSAAALLVNPCVT. The Lumenal segment spans residues 2468–2471; sequence TVRE. Residues 2472-2492 traverse the membrane as a helical segment; sequence AGILISAALLTLWDNGAIAVW. Residues 2493–3434 lie on the Cytoplasmic side of the membrane; the sequence is NSTTATGLCH…EVNVQEDRVL (942 aa). An mRNA cap 0-1 NS5-type MT domain is found at 2530–2795; it reads GRPGGRTLGE…DVNLGSGTRA (266 aa). Residues 2567 to 2587 form a disordered region; it reads SAARKARRDGNKTGGHPVSRG. Serine 2585 is a binding site for S-adenosyl-L-methionine. Residue serine 2585 is modified to Phosphoserine. Lysine 2590 serves as the catalytic For 2'-O-MTase activity. Glycine 2615, tryptophan 2616, threonine 2633, lysine 2634, aspartate 2660, and valine 2661 together coordinate S-adenosyl-L-methionine. Aspartate 2675 functions as the For 2'-O-MTase activity in the catalytic mechanism. Isoleucine 2676 is a binding site for S-adenosyl-L-methionine. Residues lysine 2711 and glutamate 2747 each act as for 2'-O-MTase activity in the active site. Tyrosine 2749 is a binding site for S-adenosyl-L-methionine. Zn(2+) is bound by residues glutamate 2969, histidine 2973, cysteine 2978, and cysteine 2981. Positions 3059 to 3211 constitute a RdRp catalytic domain; the sequence is GKMYADDTAG…KPLDDRFANA (153 aa). Histidine 3246, cysteine 3262, and cysteine 3381 together coordinate Zn(2+).

The protein in the N-terminal section; belongs to the class I-like SAM-binding methyltransferase superfamily. mRNA cap 0-1 NS5-type methyltransferase family. Homodimer. Interacts (via N-terminus) with host EXOC1 (via C-terminus); this interaction results in EXOC1 degradation through the proteasome degradation pathway. In terms of assembly, forms heterodimers with envelope protein E in the endoplasmic reticulum and Golgi. As to quaternary structure, homodimer; in the endoplasmic reticulum and Golgi. Interacts with protein prM. Interacts with non-structural protein 1. Homodimer; Homohexamer when secreted. Interacts with envelope protein E. NS1 interacts with NS4B. Interacts with host complement protein CFH; this interaction leads to the degradation of C3. In terms of assembly, interacts (via N-terminus) with serine protease NS3. As to quaternary structure, forms a heterodimer with serine protease NS3. May form homooligomers. Forms a heterodimer with NS2B. Interacts with non-structural protein 2A (via N-terminus). Interacts with NS4B. Interacts with unphosphorylated RNA-directed RNA polymerase NS5; this interaction stimulates RNA-directed RNA polymerase NS5 guanylyltransferase activity. In terms of assembly, interacts with serine protease NS3. As to quaternary structure, homodimer. Interacts with host STAT2; this interaction inhibits the phosphorylation of the latter, and, when all viral proteins are present (polyprotein), targets STAT2 for degradation. Interacts with serine protease NS3. Post-translationally, specific enzymatic cleavages in vivo yield mature proteins. Cleavages in the lumen of endoplasmic reticulum are performed by host signal peptidase, whereas cleavages in the cytoplasmic side are performed by serine protease NS3. Signal cleavage at the 2K-4B site requires a prior NS3 protease-mediated cleavage at the 4A-2K site. In terms of processing, cleaved in post-Golgi vesicles by a host furin, releasing the mature small envelope protein M, and peptide pr. This cleavage is incomplete as up to 30% of viral particles still carry uncleaved prM. N-glycosylated. Post-translationally, N-glycosylated. The excreted form is glycosylated and this is required for efficient secretion of the protein from infected cells. In terms of processing, acetylated by host KAT5. Acetylation modulates NS3 RNA-binding and unwinding activities and plays an important positive role for viral replication. Phosphorylated on serines residues. This phosphorylation may trigger NS5 nuclear localization.

It is found in the virion. It localises to the host nucleus. The protein localises to the host cytoplasm. The protein resides in the host perinuclear region. Its subcellular location is the secreted. It is found in the virion membrane. It localises to the host endoplasmic reticulum membrane. It catalyses the reaction Selective hydrolysis of -Xaa-Xaa-|-Yaa- bonds in which each of the Xaa can be either Arg or Lys and Yaa can be either Ser or Ala.. It carries out the reaction RNA(n) + a ribonucleoside 5'-triphosphate = RNA(n+1) + diphosphate. The catalysed reaction is a ribonucleoside 5'-triphosphate + H2O = a ribonucleoside 5'-diphosphate + phosphate + H(+). The enzyme catalyses ATP + H2O = ADP + phosphate + H(+). It catalyses the reaction a 5'-end (5'-triphosphoguanosine)-ribonucleoside in mRNA + S-adenosyl-L-methionine = a 5'-end (N(7)-methyl 5'-triphosphoguanosine)-ribonucleoside in mRNA + S-adenosyl-L-homocysteine. It carries out the reaction a 5'-end (N(7)-methyl 5'-triphosphoguanosine)-ribonucleoside in mRNA + S-adenosyl-L-methionine = a 5'-end (N(7)-methyl 5'-triphosphoguanosine)-(2'-O-methyl-ribonucleoside) in mRNA + S-adenosyl-L-homocysteine + H(+). Its function is as follows. Plays a role in virus budding by binding to the cell membrane and gathering the viral RNA into a nucleocapsid that forms the core of a mature virus particle. During virus entry, may induce genome penetration into the host cytoplasm after hemifusion induced by the surface proteins. Can migrate to the cell nucleus where it modulates host functions. Overcomes the anti-viral effects of host EXOC1 by sequestering and degrading the latter through the proteasome degradation pathway. Functionally, inhibits RNA silencing by interfering with host Dicer. In terms of biological role, prevents premature fusion activity of envelope proteins in trans-Golgi by binding to envelope protein E at pH6.0. After virion release in extracellular space, gets dissociated from E dimers. Acts as a chaperone for envelope protein E during intracellular virion assembly by masking and inactivating envelope protein E fusion peptide. prM is the only viral peptide matured by host furin in the trans-Golgi network probably to avoid catastrophic activation of the viral fusion activity in acidic Golgi compartment prior to virion release. prM-E cleavage is inefficient, and many virions are only partially matured. These uncleaved prM would play a role in immune evasion. Its function is as follows. May play a role in virus budding. Exerts cytotoxic effects by activating a mitochondrial apoptotic pathway through M ectodomain. May display a viroporin activity. Functionally, binds to host cell surface receptor and mediates fusion between viral and cellular membranes. Envelope protein is synthesized in the endoplasmic reticulum in the form of heterodimer with protein prM. They play a role in virion budding in the ER, and the newly formed immature particle is covered with 60 spikes composed of heterodimer between precursor prM and envelope protein E. The virion is transported to the Golgi apparatus where the low pH causes dissociation of PrM-E heterodimers and formation of E homodimers. prM-E cleavage is inefficient, and many virions are only partially matured. These uncleaved prM would play a role in immune evasion. In terms of biological role, involved in immune evasion, pathogenesis and viral replication. Once cleaved off the polyprotein, is targeted to three destinations: the viral replication cycle, the plasma membrane and the extracellular compartment. Essential for viral replication. Required for formation of the replication complex and recruitment of other non-structural proteins to the ER-derived membrane structures. Excreted as a hexameric lipoparticle that plays a role against host immune response. Antagonizing the complement function. Binds to the host macrophages and dendritic cells. Inhibits signal transduction originating from Toll-like receptor 3 (TLR3). Component of the viral RNA replication complex that functions in virion assembly and antagonizes the host alpha/beta interferon antiviral response. Its function is as follows. Required cofactor for the serine protease function of NS3. May have membrane-destabilizing activity and form viroporins. Functionally, displays three enzymatic activities: serine protease, NTPase and RNA helicase. NS3 serine protease, in association with NS2B, performs its autocleavage and cleaves the polyprotein at dibasic sites in the cytoplasm: C-prM, NS2A-NS2B, NS2B-NS3, NS3-NS4A, NS4A-2K and NS4B-NS5. NS3 RNA helicase binds RNA and unwinds dsRNA in the 3' to 5' direction. In terms of biological role, regulates the ATPase activity of the NS3 helicase activity. NS4A allows NS3 helicase to conserve energy during unwinding. Functions as a signal peptide for NS4B and is required for the interferon antagonism activity of the latter. Its function is as follows. Induces the formation of ER-derived membrane vesicles where the viral replication takes place. Inhibits interferon (IFN)-induced host STAT1 phosphorylation and nuclear translocation, thereby preventing the establishment of cellular antiviral state by blocking the IFN-alpha/beta pathway. Inhibits STAT2 translocation in the nucleus after IFN-alpha treatment. Functionally, replicates the viral (+) and (-) RNA genome, and performs the capping of genomes in the cytoplasm. NS5 methylates viral RNA cap at guanine N-7 and ribose 2'-O positions. Besides its role in RNA genome replication, also prevents the establishment of cellular antiviral state by blocking the interferon-alpha/beta (IFN-alpha/beta) signaling pathway. Inhibits host TYK2 and STAT2 phosphorylation, thereby preventing activation of JAK-STAT signaling pathway. In Usutu virus (USUV), this protein is Genome polyprotein.